The following is a 566-amino-acid chain: ATP-binding protein SyrD (566 aa).

An ABC transmembrane type-1 domain is found at 22 to 301; that stretch reads HPWLTFFTLL…LVSAMPMLAQ (280 aa). Helical transmembrane passes span 24-44, 61-81, 132-152, 158-178, 250-270, and 279-299; these read WLTF…IAVV, LFWF…ASLF, LLIM…IAYL, VVFA…LLFF, QLTL…FAVI, and VLAV…MPML. The region spanning 343 to 566 is the ABC transporter domain; the sequence is IQLKNVHMNY…VKCAVEGKRA (224 aa). ATP is bound at residue 380 to 387; the sequence is GGNGCGKS.

This sequence belongs to the ABC transporter superfamily. In terms of assembly, dimer.

It localises to the cell inner membrane. Its function is as follows. ATP-driven efflux pump necessary for the secretion of syringomycin. May specifically bind syringomycin and translocate it to the periplasmic space. SyrD is also required for full expression of the syrB gene. The protein is ATP-binding protein SyrD (syrD) of Pseudomonas syringae pv. syringae.